The following is a 267-amino-acid chain: Tryptophan synthase alpha chain (267 aa).

Active-site proton acceptor residues include E49 and D60.

It belongs to the TrpA family. As to quaternary structure, tetramer of two alpha and two beta chains.

The enzyme catalyses (1S,2R)-1-C-(indol-3-yl)glycerol 3-phosphate + L-serine = D-glyceraldehyde 3-phosphate + L-tryptophan + H2O. Its pathway is amino-acid biosynthesis; L-tryptophan biosynthesis; L-tryptophan from chorismate: step 5/5. Its function is as follows. The alpha subunit is responsible for the aldol cleavage of indoleglycerol phosphate to indole and glyceraldehyde 3-phosphate. This Acidothermus cellulolyticus (strain ATCC 43068 / DSM 8971 / 11B) protein is Tryptophan synthase alpha chain.